Consider the following 296-residue polypeptide: Nucleotide-binding protein SPT_1506 (296 aa).

Position 13-20 (13-20 (GMSGAGKT)) interacts with ATP. 63 to 66 (DMRS) is a binding site for GTP.

It belongs to the RapZ-like family.

Its function is as follows. Displays ATPase and GTPase activities. The chain is Nucleotide-binding protein SPT_1506 from Streptococcus pneumoniae (strain Taiwan19F-14).